Consider the following 151-residue polypeptide: 3-hydroxyacyl-[acyl-carrier-protein] dehydratase FabZ (151 aa).

Residue His58 is part of the active site.

The protein belongs to the thioester dehydratase family. FabZ subfamily.

It is found in the cytoplasm. The catalysed reaction is a (3R)-hydroxyacyl-[ACP] = a (2E)-enoyl-[ACP] + H2O. In terms of biological role, involved in unsaturated fatty acids biosynthesis. Catalyzes the dehydration of short chain beta-hydroxyacyl-ACPs and long chain saturated and unsaturated beta-hydroxyacyl-ACPs. The protein is 3-hydroxyacyl-[acyl-carrier-protein] dehydratase FabZ of Histophilus somni (strain 129Pt) (Haemophilus somnus).